We begin with the raw amino-acid sequence, 190 residues long: Small ribosomal subunit protein eS7A (190 aa).

Serine 2 is subject to N-acetylserine. Residues lysine 83, lysine 84, and lysine 124 each participate in a glycyl lysine isopeptide (Lys-Gly) (interchain with G-Cter in ubiquitin) cross-link.

This sequence belongs to the eukaryotic ribosomal protein eS7 family. As to quaternary structure, component of the small ribosomal subunit (SSU). Mature yeast ribosomes consist of a small (40S) and a large (60S) subunit. The 40S small subunit contains 1 molecule of ribosomal RNA (18S rRNA) and 33 different proteins (encoded by 57 genes). The large 60S subunit contains 3 rRNA molecules (25S, 5.8S and 5S rRNA) and 46 different proteins (encoded by 81 genes). Interacts with snoRNA U3. uS11 interacts with MPP10. Component of the ribosomal small subunit (SSU) processome composed of at least 40 protein subunits and snoRNA U3. N-terminally acetylated by acetyltransferase NatA. Post-translationally, ubiquitinated at Lys-83 and Lys-84 in response to stalled ribosomes, leading to activation of the No-Go Decay (NGD) pathway: first monoubiquitinated by MOT2/NOT4, followed by formation by HEL2 of 'Lys-63'-linked polyubiquitin chains on monoubiquitin.

It is found in the cytoplasm. The protein resides in the nucleus. It localises to the nucleolus. Functionally, component of the ribosome, a large ribonucleoprotein complex responsible for the synthesis of proteins in the cell. The small ribosomal subunit (SSU) binds messenger RNAs (mRNAs) and translates the encoded message by selecting cognate aminoacyl-transfer RNA (tRNA) molecules. The large subunit (LSU) contains the ribosomal catalytic site termed the peptidyl transferase center (PTC), which catalyzes the formation of peptide bonds, thereby polymerizing the amino acids delivered by tRNAs into a polypeptide chain. The nascent polypeptides leave the ribosome through a tunnel in the LSU and interact with protein factors that function in enzymatic processing, targeting, and the membrane insertion of nascent chains at the exit of the ribosomal tunnel. eS7 is involved in nucleolar processing of pre-18S ribosomal RNA and ribosome assembly. The protein is Small ribosomal subunit protein eS7A of Saccharomyces cerevisiae (strain ATCC 204508 / S288c) (Baker's yeast).